A 698-amino-acid polypeptide reads, in one-letter code: MARKTPIERYRNIGIAAHIDAGKTTTTERILFYTGVSHKMGETHDGAATMDWMSQEQERGITITSAATTCFWRGMDQQYPETRINIIDTPGHVDFTIEVERSLRVLDGAVAVFCAVGGVEPQSETVWRQANKYGVPRIAFVNKMDRAGADFSRVVGQIRDRLGSQAVPIQLPIGAEDNFQGVIDLLRMSAIYWDRDEQGMTYSETEIPEELKADAEAAREEMVEAAAEADEELMDKYLNEGELSHDDIKRGLRQRTLNTEIVLCMCGSAFKNKGVQTLLDAVIEFLPAPNEVPAIEGLLDDEETVVTRESTDDQPFAALAFKIANDPYVGNLTFFRVYSGVLSSGDAVFNPVKGKKERIGRLLQMHSNQREEIKEVRAGDIAAAVGLKDVTTGDTLCDPSNKVTLERMEFPEPVIAVAVEPKTRSDQEKMGQALGRLAQEDPSFRVRTDEESGQTIISGMGELHLDIIVDRLKREFKVEANVGAPQVAYRETIRKQIEQEGKFVRQSGGRGQYGHVHIRMKPQERGEGYSFESKIVGGVVPKEYIPSVDHGCREVMEEGVLAGYPVVDVGVELYDGSYHDVDSSEMAFKIAGSMAFREGFMKADPVLLEPVMKVEVVTPEEYMGDVVGDLNRRRGTVQKMEDIPNGKQIRAQVPLKEMFGYATDLRSNTQGRASYVMEFEEYHEAPASIADEVIKKAS.

The region spanning 8–290 is the tr-type G domain; it reads ERYRNIGIAA…AVIEFLPAPN (283 aa). Residues 17–24, 88–92, and 142–145 contribute to the GTP site; these read AHIDAGKT, DTPGH, and NKMD.

It belongs to the TRAFAC class translation factor GTPase superfamily. Classic translation factor GTPase family. EF-G/EF-2 subfamily.

The protein resides in the cytoplasm. Functionally, catalyzes the GTP-dependent ribosomal translocation step during translation elongation. During this step, the ribosome changes from the pre-translocational (PRE) to the post-translocational (POST) state as the newly formed A-site-bound peptidyl-tRNA and P-site-bound deacylated tRNA move to the P and E sites, respectively. Catalyzes the coordinated movement of the two tRNA molecules, the mRNA and conformational changes in the ribosome. The polypeptide is Elongation factor G (Halorhodospira halophila (strain DSM 244 / SL1) (Ectothiorhodospira halophila (strain DSM 244 / SL1))).